We begin with the raw amino-acid sequence, 745 residues long: AMP deaminase 1 (745 aa).

Phosphothreonine is present on Thr79. Ser83 carries the post-translational modification Phosphoserine. A Phosphotyrosine modification is found at Tyr214. Zn(2+) is bound by residues His301 and His303. Residues His303 and 372 to 377 (KFNDKY) each bind substrate. Ser439 bears the Phosphoserine mark. His570 is a Zn(2+) binding site. Glu573 contributes to the substrate binding site. Catalysis depends on His592, which acts as the Proton acceptor. Asp647 provides a ligand contact to Zn(2+). 648 to 651 (DPMQ) is a substrate binding site.

The protein belongs to the metallo-dependent hydrolases superfamily. Adenosine and AMP deaminases family. In terms of assembly, homotetramer. Zn(2+) is required as a cofactor.

It carries out the reaction AMP + H2O + H(+) = IMP + NH4(+). It functions in the pathway purine metabolism; IMP biosynthesis via salvage pathway; IMP from AMP: step 1/1. Functionally, AMP deaminase plays a critical role in energy metabolism. This Mus musculus (Mouse) protein is AMP deaminase 1.